A 142-amino-acid chain; its full sequence is Large ribosomal subunit protein uL13 (142 aa).

This sequence belongs to the universal ribosomal protein uL13 family. As to quaternary structure, part of the 50S ribosomal subunit.

Its function is as follows. This protein is one of the early assembly proteins of the 50S ribosomal subunit, although it is not seen to bind rRNA by itself. It is important during the early stages of 50S assembly. The protein is Large ribosomal subunit protein uL13 of Shewanella denitrificans (strain OS217 / ATCC BAA-1090 / DSM 15013).